A 224-amino-acid chain; its full sequence is MHINNWPTHERPREKLLAHGAATLSDAELLAIFLGSGLRGHDAVQTARNLLHTHGPLRELLDRPPGDLMRLPGLGLARACKLTAALELSTRHLAAALQRGASIHDPISAGRYFAQRLRANPNEVFAVLFLDNRHRAISFEELFHGTINGAEVHPREVVRRALTLNAAAVIVGHNHPSGNREPSPADRMITQRLKNALDLIDVRLVDHFVIGDGAPVSFAEHGWL.

The 123-residue stretch at 102–224 (SIHDPISAGR…PVSFAEHGWL (123 aa)) folds into the MPN domain. Zn(2+) contacts are provided by His-173, His-175, and Asp-186. Residues 173-186 (HNHPSGNREPSPAD) carry the JAMM motif motif.

It belongs to the UPF0758 family.

The chain is UPF0758 protein XF_0148 from Xylella fastidiosa (strain 9a5c).